Reading from the N-terminus, the 574-residue chain is Lysyl oxidase homolog 1 (574 aa).

Positions 1–25 are cleaved as a signal peptide; the sequence is MALARGSRQLGALVWGACLCVLVHG. Positions 26–95 are excised as a propeptide; it reads QQAQPGQGSD…RRSHGSPRRR (70 aa). Disordered regions lie at residues 62-123 and 239-374; these read VPAG…GFGQ and GGEE…DLVP. Residues 86–96 are compositionally biased toward basic residues; that stretch reads RRSHGSPRRRQ. 2 stretches are compositionally biased toward pro residues: residues 255 to 268 and 313 to 332; these read PERPYVPPPPPPPD and YANPPPEAYGPPRALEPPYL. An interaction with FBLN5 region spans residues 311–369; it reads PPYANPPPEAYGPPRALEPPYLPVRSSDTPPPGGERNGAQQGRLSVGSVYRPNQNGRGL. Positions 370–574 are lysyl-oxidase like; that stretch reads PDLVPDPNYV…SATNCKIVQS (205 aa). Disulfide bonds link C395–C401, C448–C497, C481–C487, C508–C518, and C555–C569. Positions 449, 451, and 453 each coordinate Cu cation. Positions 477 to 512 form a cross-link, lysine tyrosylquinone (Lys-Tyr); alternate; sequence KASFCLEDSTCDFGNLKRYACTSHTQGLSPGCYDTY. Y512 is modified (2',4',5'-topaquinone; alternate).

This sequence belongs to the lysyl oxidase family. Interacts (via propeptide) with EFEMP2. Interacts with FBLN5. It depends on Cu cation as a cofactor. Lysine tyrosylquinone residue is required as a cofactor. In terms of processing, the lysine tyrosylquinone cross-link (LTQ) is generated by condensation of the epsilon-amino group of a lysine with a topaquinone produced by oxidation of tyrosine. Post-translationally, proteolytic processing by a furin-like protease causes removal of N-terminal propeptide resulting in an enzyme largely inactive, but further proteolytic processing by BMP1 results in enzyme activation. As to expression, expressed in ocular tissues including the iris, ciliary body, lens and optic nerve. Not detected in the retina.

The protein localises to the secreted. Its subcellular location is the extracellular space. It is found in the extracellular matrix. The enzyme catalyses L-lysyl-[protein] + O2 + H2O = (S)-2-amino-6-oxohexanoyl-[protein] + H2O2 + NH4(+). In terms of biological role, catalyzes the oxidative deamination of lysine and hydroxylysine residues in collagen and elastin, resulting in the formation of covalent cross-linkages, and the stabilization of collagen and elastin fibers. Essential for the elastic fiber homeostasis and for their maintenance at adult age. The sequence is that of Lysyl oxidase homolog 1 (LOXL1) from Homo sapiens (Human).